A 554-amino-acid chain; its full sequence is Malate synthase 2 (554 aa).

The active-site Proton acceptor is Arg-177. The active-site Proton donor is Asp-457. Residues 552-554 carry the SKL peroxisome targeting motif motif; sequence SKL.

Belongs to the malate synthase family. Interacts with PEX9.

The protein resides in the peroxisome matrix. It catalyses the reaction glyoxylate + acetyl-CoA + H2O = (S)-malate + CoA + H(+). Allantoin metabolism-specific malate synthase involved in the recycling the glyoxylate generated during allantoin degradation by the ureidoglycollate (UG) hydrolase reaction. The polypeptide is Malate synthase 2 (Saccharomyces cerevisiae (strain ATCC 204508 / S288c) (Baker's yeast)).